The primary structure comprises 1159 residues: Reverse gyrase 2 (1159 aa).

The segment at 1–40 adopts an RG N-terminal-type zinc-finger fold; sequence MALELIERGCPNCGGVISSDRLEKGLPCSKCLPKPTEEKV. Positions 10, 13, 28, and 31 each coordinate Zn(2+). ATP-binding positions include Gln-82 and 99 to 106; that span reads APTGVGKT. A Helicase ATP-binding domain is found at 86–275; sequence AKRVFMNQSF…LFRNLLGFDV (190 aa). A DEAD box motif is present at residues 196–199; sequence DDID. Positions 583 to 1159 are topoisomerase I; the sequence is DLFKTTLVIV…LLKEEKAFKK (577 aa). Residues 587–743 enclose the Toprim domain; sequence TTLVIVESPN…NIKRAEFHEV (157 aa). Residues Glu-593 and Asp-712 each coordinate Mg(2+). One can recognise a Topo IA-type catalytic domain in the interval 759 to 1152; it reads DLNLVKAQLV…EVHRIKVLLK (394 aa). Tyr-902 (O-(5'-phospho-DNA)-tyrosine intermediate) is an active-site residue.

It in the N-terminal section; belongs to the DEAD box helicase family. DDVD subfamily. This sequence in the C-terminal section; belongs to the type IA topoisomerase family. In terms of assembly, monomer. It depends on Zn(2+) as a cofactor. The cofactor is Mg(2+).

It localises to the cytoplasm. The enzyme catalyses ATP + H2O = ADP + phosphate + H(+). Functionally, modifies the topological state of DNA by introducing positive supercoils in an ATP-dependent process, increasing the linking number in steps of +1. Binds to single-stranded DNA, transiently cleaves and then rejoins the ends, introducing a positive supercoil in the process. The scissile phosphodiester is attacked by the catalytic tyrosine of the enzyme, resulting in the formation of a DNA-(5'-phosphotyrosyl)-enzyme intermediate. Probably involved in rewinding DNA strands in regions of the chromosome that have opened up to allow replication, transcription, DNA repair and/or for DNA protection. This is Reverse gyrase 2 from Aquifex aeolicus (strain VF5).